The primary structure comprises 607 residues: Vacuolar fusion protein MON1 homolog (607 aa).

Residues 1–14 (MATSDSRSSPSSSD) are compositionally biased toward low complexity. Disordered stretches follow at residues 1 to 173 (MATS…DDAS) and 463 to 486 (PIDR…DISV). Polar residues predominate over residues 21 to 55 (NPSSDPETNSERVQSQLESMNLSQPSEVSDGSHTE).

The protein belongs to the MON1/SAND family. As to quaternary structure, interacts with CCZ1A, CCZ1B and RABF2B. As to expression, widely expressed at stable levels.

Its subcellular location is the endosome. The protein resides in the prevacuolar compartment. In terms of biological role, plays an important role in membrane trafficking through the secretory apparatus. In complex with CCZ1, acts as a guanine exchange factor (GEF) for RABG3F of the Rab7 protein family. Promotes the exchange of GDP to GTP, converting RABG3F from an inactive GDP-bound form into an active GTP-bound form. The RABG3F active form is involved in protein trafficking from prevacuolar compartments (PVCs) to vacuoles. May serve as a linker between Rab5 and Rab7 protein families in PVCs and mediate PVC maturation. The polypeptide is Vacuolar fusion protein MON1 homolog (Arabidopsis thaliana (Mouse-ear cress)).